Consider the following 139-residue polypeptide: NADPH-dependent 7-cyano-7-deazaguanine reductase (139 aa).

Cysteine 34 serves as the catalytic Thioimide intermediate. Residue aspartate 41 is the Proton donor of the active site. Substrate is bound by residues 56–58 and 75–76; these read VEL and HE.

It belongs to the GTP cyclohydrolase I family. QueF type 1 subfamily.

The protein localises to the cytoplasm. It carries out the reaction 7-aminomethyl-7-carbaguanine + 2 NADP(+) = 7-cyano-7-deazaguanine + 2 NADPH + 3 H(+). It functions in the pathway tRNA modification; tRNA-queuosine biosynthesis. Catalyzes the NADPH-dependent reduction of 7-cyano-7-deazaguanine (preQ0) to 7-aminomethyl-7-deazaguanine (preQ1). This Thiobacillus denitrificans (strain ATCC 25259 / T1) protein is NADPH-dependent 7-cyano-7-deazaguanine reductase.